Reading from the N-terminus, the 51-residue chain is Lipid-anchored plasma membrane protein CPP3 (51 aa).

Residues 1 to 28 (MRHHQNMHYAPQQQPVYVQQPPPRRESG) are disordered.

Belongs to the CYSTM1 family. Post-translationally, palmitoylated near the C-terminus.

It localises to the cell membrane. This Saccharomyces cerevisiae (strain ATCC 204508 / S288c) (Baker's yeast) protein is Lipid-anchored plasma membrane protein CPP3.